A 364-amino-acid chain; its full sequence is Aminomethyltransferase (364 aa).

It belongs to the GcvT family. The glycine cleavage system is composed of four proteins: P, T, L and H.

The enzyme catalyses N(6)-[(R)-S(8)-aminomethyldihydrolipoyl]-L-lysyl-[protein] + (6S)-5,6,7,8-tetrahydrofolate = N(6)-[(R)-dihydrolipoyl]-L-lysyl-[protein] + (6R)-5,10-methylene-5,6,7,8-tetrahydrofolate + NH4(+). Functionally, the glycine cleavage system catalyzes the degradation of glycine. This chain is Aminomethyltransferase, found in Salmonella paratyphi B (strain ATCC BAA-1250 / SPB7).